A 1413-amino-acid polypeptide reads, in one-letter code: DNA-directed RNA polymerase subunit beta' (1413 aa).

Residues cysteine 72, cysteine 74, cysteine 87, and cysteine 90 each contribute to the Zn(2+) site. Mg(2+) contacts are provided by aspartate 463, aspartate 465, and aspartate 467. The Zn(2+) site is built by cysteine 811, cysteine 885, cysteine 892, and cysteine 895.

It belongs to the RNA polymerase beta' chain family. In terms of assembly, the RNAP catalytic core consists of 2 alpha, 1 beta, 1 beta' and 1 omega subunit. When a sigma factor is associated with the core the holoenzyme is formed, which can initiate transcription. It depends on Mg(2+) as a cofactor. Zn(2+) serves as cofactor.

It carries out the reaction RNA(n) + a ribonucleoside 5'-triphosphate = RNA(n+1) + diphosphate. Functionally, DNA-dependent RNA polymerase catalyzes the transcription of DNA into RNA using the four ribonucleoside triphosphates as substrates. The polypeptide is DNA-directed RNA polymerase subunit beta' (Ruegeria pomeroyi (strain ATCC 700808 / DSM 15171 / DSS-3) (Silicibacter pomeroyi)).